The primary structure comprises 406 residues: Acetylornithine aminotransferase (406 aa).

Residues glycine 113–threonine 114 and phenylalanine 145 each bind pyridoxal 5'-phosphate. Residue arginine 148 coordinates N(2)-acetyl-L-ornithine. Aspartate 233 to glutamine 236 lines the pyridoxal 5'-phosphate pocket. Lysine 262 is subject to N6-(pyridoxal phosphate)lysine. Residue serine 290 participates in N(2)-acetyl-L-ornithine binding. Threonine 291 provides a ligand contact to pyridoxal 5'-phosphate.

This sequence belongs to the class-III pyridoxal-phosphate-dependent aminotransferase family. ArgD subfamily. As to quaternary structure, homodimer. Pyridoxal 5'-phosphate serves as cofactor.

It is found in the cytoplasm. The enzyme catalyses N(2)-acetyl-L-ornithine + 2-oxoglutarate = N-acetyl-L-glutamate 5-semialdehyde + L-glutamate. It participates in amino-acid biosynthesis; L-arginine biosynthesis; N(2)-acetyl-L-ornithine from L-glutamate: step 4/4. The chain is Acetylornithine aminotransferase from Leptospira interrogans serogroup Icterohaemorrhagiae serovar Lai (strain 56601).